Here is a 222-residue protein sequence, read N- to C-terminus: Potassium-transporting ATPase KdpC subunit (222 aa).

Residues 13 to 35 (WAGLRSLLVLTVVTGVLYPLAVT) traverse the membrane as a helical segment. The segment at 136 to 162 (TADHKVKPSDVPADAVTSSGSGLDPDI) is disordered.

It belongs to the KdpC family. In terms of assembly, the system is composed of three essential subunits: KdpA, KdpB and KdpC.

It is found in the cell membrane. Its function is as follows. Part of the high-affinity ATP-driven potassium transport (or Kdp) system, which catalyzes the hydrolysis of ATP coupled with the electrogenic transport of potassium into the cytoplasm. This subunit acts as a catalytic chaperone that increases the ATP-binding affinity of the ATP-hydrolyzing subunit KdpB by the formation of a transient KdpB/KdpC/ATP ternary complex. The chain is Potassium-transporting ATPase KdpC subunit from Streptomyces avermitilis (strain ATCC 31267 / DSM 46492 / JCM 5070 / NBRC 14893 / NCIMB 12804 / NRRL 8165 / MA-4680).